We begin with the raw amino-acid sequence, 232 residues long: 2,3-bisphosphoglycerate-dependent phosphoglycerate mutase (232 aa).

Substrate contacts are provided by residues Arg10–Asn17, Thr23–Gly24, Arg62, Glu89–Tyr92, Lys100, Arg116–Arg117, and Gly185–Asn186. His11 serves as the catalytic Tele-phosphohistidine intermediate. Glu89 (proton donor/acceptor) is an active-site residue.

This sequence belongs to the phosphoglycerate mutase family. BPG-dependent PGAM subfamily. As to quaternary structure, homodimer.

It carries out the reaction (2R)-2-phosphoglycerate = (2R)-3-phosphoglycerate. Its pathway is carbohydrate degradation; glycolysis; pyruvate from D-glyceraldehyde 3-phosphate: step 3/5. Functionally, catalyzes the interconversion of 2-phosphoglycerate and 3-phosphoglycerate. The sequence is that of 2,3-bisphosphoglycerate-dependent phosphoglycerate mutase from Blochmanniella floridana.